The primary structure comprises 60 residues: Large ribosomal subunit protein uL30 (60 aa).

Belongs to the universal ribosomal protein uL30 family. In terms of assembly, part of the 50S ribosomal subunit.

This is Large ribosomal subunit protein uL30 from Oceanobacillus iheyensis (strain DSM 14371 / CIP 107618 / JCM 11309 / KCTC 3954 / HTE831).